The primary structure comprises 60 residues: MSFDKKLLEIVACPVCKGKLDYEKSSQRLICKADHLAYPINDGIPVLLENKAERWQEAEA.

The protein belongs to the UPF0434 family.

The protein is UPF0434 protein Ssed_2824 of Shewanella sediminis (strain HAW-EB3).